Reading from the N-terminus, the 343-residue chain is Holliday junction branch migration complex subunit RuvB (343 aa).

The large ATPase domain (RuvB-L) stretch occupies residues 1 to 181 (MDRIVEIEKV…FGMQFRLQFY (181 aa)). Residues leucine 20, arginine 21, glycine 62, lysine 65, threonine 66, threonine 67, 128–130 (EDF), arginine 171, tyrosine 181, and arginine 218 contribute to the ATP site. Threonine 66 lines the Mg(2+) pocket. Residues 182–252 (TDNELARIIS…RAKSSLDSLG (71 aa)) are small ATPAse domain (RuvB-S). The interval 255 to 343 (DLGFDEMDLK…EKQNKGLFNE (89 aa)) is head domain (RuvB-H). Residues arginine 308 and arginine 313 each contribute to the DNA site.

It belongs to the RuvB family. Homohexamer. Forms an RuvA(8)-RuvB(12)-Holliday junction (HJ) complex. HJ DNA is sandwiched between 2 RuvA tetramers; dsDNA enters through RuvA and exits via RuvB. An RuvB hexamer assembles on each DNA strand where it exits the tetramer. Each RuvB hexamer is contacted by two RuvA subunits (via domain III) on 2 adjacent RuvB subunits; this complex drives branch migration. In the full resolvosome a probable DNA-RuvA(4)-RuvB(12)-RuvC(2) complex forms which resolves the HJ.

The protein resides in the cytoplasm. It catalyses the reaction ATP + H2O = ADP + phosphate + H(+). Its function is as follows. The RuvA-RuvB-RuvC complex processes Holliday junction (HJ) DNA during genetic recombination and DNA repair, while the RuvA-RuvB complex plays an important role in the rescue of blocked DNA replication forks via replication fork reversal (RFR). RuvA specifically binds to HJ cruciform DNA, conferring on it an open structure. The RuvB hexamer acts as an ATP-dependent pump, pulling dsDNA into and through the RuvAB complex. RuvB forms 2 homohexamers on either side of HJ DNA bound by 1 or 2 RuvA tetramers; 4 subunits per hexamer contact DNA at a time. Coordinated motions by a converter formed by DNA-disengaged RuvB subunits stimulates ATP hydrolysis and nucleotide exchange. Immobilization of the converter enables RuvB to convert the ATP-contained energy into a lever motion, pulling 2 nucleotides of DNA out of the RuvA tetramer per ATP hydrolyzed, thus driving DNA branch migration. The RuvB motors rotate together with the DNA substrate, which together with the progressing nucleotide cycle form the mechanistic basis for DNA recombination by continuous HJ branch migration. Branch migration allows RuvC to scan DNA until it finds its consensus sequence, where it cleaves and resolves cruciform DNA. The polypeptide is Holliday junction branch migration complex subunit RuvB (Campylobacter fetus subsp. fetus (strain 82-40)).